The chain runs to 513 residues: OTU domain-containing protein 5-A (513 aa).

Disordered regions lie at residues 1-75 (MTIL…GGAG) and 99-136 (GPGHSKRRRQVLSAGPGATGNCPDTDDGAGNNSEDEYE). In terms of domain architecture, OTU spans 166-289 (FIIKQMKEDG…NIHYNSVVNP (124 aa)). Residues 171-177 (MKEDGAC) form a cys-loop region. Aspartate 174 is a catalytic residue. Cysteine 177 serves as the catalytic Nucleophile. The interval 226–236 (KRKNNCHGNHI) is variable-loop. The interval 277 to 282 (YHRNIH) is his-loop. Residue histidine 282 is part of the active site. The interval 387 to 446 (LEEWSGRSPRQRSTAGSPEHPDLHAELCMKPPSPGAPLILGKPPSPCAPGPSNQMSTGAD) is disordered.

This sequence belongs to the peptidase C85 family.

The catalysed reaction is Thiol-dependent hydrolysis of ester, thioester, amide, peptide and isopeptide bonds formed by the C-terminal Gly of ubiquitin (a 76-residue protein attached to proteins as an intracellular targeting signal).. Functionally, deubiquitinating enzyme that may function as negative regulator of the innate immune system. Has peptidase activity towards 'Lys-48'- and 'Lys-63'-linked polyubiquitin chains. Can also cleave 'Lys-11'-linked ubiquitin chains (in vitro). This chain is OTU domain-containing protein 5-A (otud5-a), found in Xenopus laevis (African clawed frog).